Reading from the N-terminus, the 408-residue chain is Argininosuccinate synthase (408 aa).

Residues 10–18 and alanine 37 contribute to the ATP site; that span reads AYSGGLDTS. Residues tyrosine 90 and serine 95 each coordinate L-citrulline. Glycine 120 lines the ATP pocket. Positions 122, 126, and 127 each coordinate L-aspartate. Residue asparagine 126 participates in L-citrulline binding. Arginine 130, serine 181, serine 190, glutamate 266, and tyrosine 278 together coordinate L-citrulline.

The protein belongs to the argininosuccinate synthase family. Type 1 subfamily. Homotetramer.

It is found in the cytoplasm. It carries out the reaction L-citrulline + L-aspartate + ATP = 2-(N(omega)-L-arginino)succinate + AMP + diphosphate + H(+). The protein operates within amino-acid biosynthesis; L-arginine biosynthesis; L-arginine from L-ornithine and carbamoyl phosphate: step 2/3. This chain is Argininosuccinate synthase, found in Cereibacter sphaeroides (strain ATCC 17029 / ATH 2.4.9) (Rhodobacter sphaeroides).